The following is a 200-amino-acid chain: Pyridoxamine 5'-phosphate oxidase homolog (200 aa).

Residues Phe-60, Lys-68, and Asn-125 each contribute to the FMN site.

This sequence belongs to the pyridoxamine 5'-phosphate oxidase family. It depends on FMN as a cofactor.

It is found in the cytoplasm. It localises to the nucleus. This Saccharomyces cerevisiae (strain ATCC 204508 / S288c) (Baker's yeast) protein is Pyridoxamine 5'-phosphate oxidase homolog.